The following is a 454-amino-acid chain: Bifunctional protein GlmU (454 aa).

The interval 1–233 (MQATPRPLAL…EAETIGINSR (233 aa)) is pyrophosphorylase. UDP-N-acetyl-alpha-D-glucosamine-binding positions include 13–16 (LAAG), K27, Q80, 85–86 (GT), 108–110 (YGD), G145, E159, N174, and N231. D110 lines the Mg(2+) pocket. N231 provides a ligand contact to Mg(2+). The linker stretch occupies residues 234-254 (AELVRAEAQFQSQRRAALIEA). The segment at 255–454 (GVTMQAPDSV…KAIKDAKSKD (200 aa)) is N-acetyltransferase. The UDP-N-acetyl-alpha-D-glucosamine site is built by R320 and K338. The active-site Proton acceptor is H350. Residues Y353 and N364 each coordinate UDP-N-acetyl-alpha-D-glucosamine. Acetyl-CoA is bound by residues A367, 373–374 (NY), S392, S410, and R427.

The protein in the N-terminal section; belongs to the N-acetylglucosamine-1-phosphate uridyltransferase family. In the C-terminal section; belongs to the transferase hexapeptide repeat family. As to quaternary structure, homotrimer. Mg(2+) is required as a cofactor.

The protein resides in the cytoplasm. It carries out the reaction alpha-D-glucosamine 1-phosphate + acetyl-CoA = N-acetyl-alpha-D-glucosamine 1-phosphate + CoA + H(+). The enzyme catalyses N-acetyl-alpha-D-glucosamine 1-phosphate + UTP + H(+) = UDP-N-acetyl-alpha-D-glucosamine + diphosphate. It functions in the pathway nucleotide-sugar biosynthesis; UDP-N-acetyl-alpha-D-glucosamine biosynthesis; N-acetyl-alpha-D-glucosamine 1-phosphate from alpha-D-glucosamine 6-phosphate (route II): step 2/2. The protein operates within nucleotide-sugar biosynthesis; UDP-N-acetyl-alpha-D-glucosamine biosynthesis; UDP-N-acetyl-alpha-D-glucosamine from N-acetyl-alpha-D-glucosamine 1-phosphate: step 1/1. It participates in bacterial outer membrane biogenesis; LPS lipid A biosynthesis. In terms of biological role, catalyzes the last two sequential reactions in the de novo biosynthetic pathway for UDP-N-acetylglucosamine (UDP-GlcNAc). The C-terminal domain catalyzes the transfer of acetyl group from acetyl coenzyme A to glucosamine-1-phosphate (GlcN-1-P) to produce N-acetylglucosamine-1-phosphate (GlcNAc-1-P), which is converted into UDP-GlcNAc by the transfer of uridine 5-monophosphate (from uridine 5-triphosphate), a reaction catalyzed by the N-terminal domain. The protein is Bifunctional protein GlmU of Jannaschia sp. (strain CCS1).